Reading from the N-terminus, the 253-residue chain is Putative B3 domain-containing protein Os03g0619850 (253 aa).

Residues 26-119 (MSCFLIRMTT…CFEVMILDSD (94 aa)) constitute a DNA-binding region (TF-B3). Disordered stretches follow at residues 126-150 (LKSN…AGPP) and 230-253 (HRDA…EQDS). Residues 230–239 (HRDADQERQM) show a composition bias toward basic and acidic residues.

The protein localises to the nucleus. This chain is Putative B3 domain-containing protein Os03g0619850, found in Oryza sativa subsp. japonica (Rice).